We begin with the raw amino-acid sequence, 111 residues long: Prothymosin alpha-A (111 aa).

A disordered region spans residues 1–111 (MSDTAVDASV…IKKQKTDEDD (111 aa)). Positions 9–42 (SVEKTTKDLKAKEKEVVEEAENGKDKPTNGKAEN) are enriched in basic and acidic residues. 2 stretches are compositionally biased toward acidic residues: residues 43–81 (EENGEPEVDNEGDEEDEVDEEDEEDEVEGEDDDDDDEVE) and 90–100 (EDDEDDDDDDV). A compositionally biased stretch (basic and acidic residues) spans 101-111 (EIKKQKTDEDD).

This sequence belongs to the pro/parathymosin family.

The protein resides in the nucleus. This Xenopus laevis (African clawed frog) protein is Prothymosin alpha-A (ptma-a).